Here is a 269-residue protein sequence, read N- to C-terminus: Diaminopimelate epimerase (269 aa).

Asn-15, Gln-49, and Asn-66 together coordinate substrate. Cys-75 acts as the Proton donor in catalysis. Residues 76-77, Asn-155, Asn-187, and 204-205 contribute to the substrate site; these read GN and ER. The active-site Proton acceptor is Cys-213. 214–215 is a substrate binding site; that stretch reads GS.

The protein belongs to the diaminopimelate epimerase family. Homodimer.

The protein localises to the cytoplasm. It catalyses the reaction (2S,6S)-2,6-diaminopimelate = meso-2,6-diaminopimelate. It participates in amino-acid biosynthesis; L-lysine biosynthesis via DAP pathway; DL-2,6-diaminopimelate from LL-2,6-diaminopimelate: step 1/1. Its function is as follows. Catalyzes the stereoinversion of LL-2,6-diaminopimelate (L,L-DAP) to meso-diaminopimelate (meso-DAP), a precursor of L-lysine and an essential component of the bacterial peptidoglycan. In Rickettsia canadensis (strain McKiel), this protein is Diaminopimelate epimerase.